Consider the following 400-residue polypeptide: General L-amino acid transport system permease protein AapQ (400 aa).

Transmembrane regions (helical) follow at residues 29 to 49, 100 to 120, 142 to 162, 188 to 208, 225 to 245, 264 to 284, 340 to 360, and 367 to 387; these read SIFYQILTIVILVGFVWWVAH, LLVAVTGIFTATIIGFLIGIG, IPPLLVIFFWYLGVLSVLPQP, TGMIAVGIALVIAIVASIIIA, VWTAIALIVGLPLLVFVVSGF, VVGPEFMSLFLALSFYTASFI, NSSLAIAIGFSDLVAVGGTIL, and IEIVCIWGIVYLSLSILTSLF. Positions 96 to 388 constitute an ABC transmembrane type-1 domain; sequence ILNTLLVAVT…SLSILTSLFM (293 aa).

The protein belongs to the binding-protein-dependent transport system permease family. HisMQ subfamily.

The protein resides in the cell inner membrane. Part of a binding-protein-dependent transport system for L-amino acids, affects the uptake as well as efflux of these amino acids. Probably responsible for the translocation of the substrate across the membrane. The protein is General L-amino acid transport system permease protein AapQ (aapQ) of Rhizobium johnstonii (strain DSM 114642 / LMG 32736 / 3841) (Rhizobium leguminosarum bv. viciae).